The chain runs to 175 residues: tRNA (cytidine(56)-2'-O)-methyltransferase (175 aa).

L83 contributes to the S-adenosyl-L-methionine binding site.

The protein belongs to the aTrm56 family. Homodimer.

The protein localises to the cytoplasm. It catalyses the reaction cytidine(56) in tRNA + S-adenosyl-L-methionine = 2'-O-methylcytidine(56) in tRNA + S-adenosyl-L-homocysteine + H(+). Its function is as follows. Specifically catalyzes the AdoMet-dependent 2'-O-ribose methylation of cytidine at position 56 in tRNAs. The sequence is that of tRNA (cytidine(56)-2'-O)-methyltransferase from Methanosphaera stadtmanae (strain ATCC 43021 / DSM 3091 / JCM 11832 / MCB-3).